We begin with the raw amino-acid sequence, 543 residues long: T-complex protein 1 subunit eta (543 aa).

M1 carries the N-acetylmethionine modification. G41 contacts ADP. G41 serves as a coordination point for ATP. K67 carries the N6-acetyllysine modification. D92 serves as a coordination point for Mg(2+). G93, T94, T95, S96, S164, and S165 together coordinate ADP. ATP is bound at residue G93. ATP is bound at residue S96. An N6-acetyllysine mark is found at K250 and K320. Residues R398 and G409 each coordinate ATP. Position 409 (G409) interacts with ADP. K430 is covalently cross-linked (Glycyl lysine isopeptide (Lys-Gly) (interchain with G-Cter in SUMO2)). ADP is bound by residues E494 and R499. R499 contacts ATP. The disordered stretch occupies residues 524–543 (RSTVDASPAAGRGRGRGRLH). At R535 the chain carries Omega-N-methylarginine.

It belongs to the TCP-1 chaperonin family. Component of the chaperonin-containing T-complex (TRiC), a hexadecamer composed of two identical back-to-back stacked rings enclosing a protein folding chamber. Each ring is made up of eight different subunits: TCP1/CCT1, CCT2, CCT3, CCT4, CCT5, CCT6A/CCT6, CCT7, CCT8. Interacts with PACRG. Interacts with DLEC1.

It is found in the cytoplasm. It catalyses the reaction ATP + H2O = ADP + phosphate + H(+). Component of the chaperonin-containing T-complex (TRiC), a molecular chaperone complex that assists the folding of actin, tubulin and other proteins upon ATP hydrolysis. The TRiC complex mediates the folding of WRAP53/TCAB1, thereby regulating telomere maintenance. In Bos taurus (Bovine), this protein is T-complex protein 1 subunit eta (CCT7).